A 404-amino-acid chain; its full sequence is Cysteine desulfurase IscS (404 aa).

Pyridoxal 5'-phosphate is bound by residues A75–T76, N155, Q183, and S203–H205. Residue K206 is modified to N6-(pyridoxal phosphate)lysine. T243 lines the pyridoxal 5'-phosphate pocket. C328 acts as the Cysteine persulfide intermediate in catalysis. [2Fe-2S] cluster is bound at residue C328.

It belongs to the class-V pyridoxal-phosphate-dependent aminotransferase family. NifS/IscS subfamily. In terms of assembly, homodimer. Forms a heterotetramer with IscU, interacts with other sulfur acceptors. It depends on pyridoxal 5'-phosphate as a cofactor.

The protein localises to the cytoplasm. It catalyses the reaction (sulfur carrier)-H + L-cysteine = (sulfur carrier)-SH + L-alanine. It participates in cofactor biosynthesis; iron-sulfur cluster biosynthesis. In terms of biological role, master enzyme that delivers sulfur to a number of partners involved in Fe-S cluster assembly, tRNA modification or cofactor biosynthesis. Catalyzes the removal of elemental sulfur atoms from cysteine to produce alanine. Functions as a sulfur delivery protein for Fe-S cluster synthesis onto IscU, an Fe-S scaffold assembly protein, as well as other S acceptor proteins. The sequence is that of Cysteine desulfurase IscS from Shewanella sp. (strain MR-4).